We begin with the raw amino-acid sequence, 78 residues long: MLTLKKSMLLLFFLGMVSLSLANSKRADEEGEDKRADEEGEDKRADEEGEDKRADEEGEEKRKRFLGGILNTITGLLG.

A signal peptide spans 1-22 (MLTLKKSMLLLFFLGMVSLSLA). Residues 23 to 64 (NSKRADEEGEDKRADEEGEDKRADEEGEDKRADEEGEEKRKR) constitute a propeptide that is removed on maturation. The interval 24-60 (SKRADEEGEDKRADEEGEDKRADEEGEDKRADEEGEE) is disordered. Basic and acidic residues predominate over residues 25–60 (KRADEEGEDKRADEEGEDKRADEEGEDKRADEEGEE). Leu-77 carries the post-translational modification Leucine amide.

The protein belongs to the frog skin active peptide (FSAP) family. Brevinin subfamily. As to expression, expressed by the skin glands.

The protein resides in the secreted. Antimicrobial peptide. Active against the Gram-positive bacterium S.aureus (MIC=30 uM) and the yeast C.albicans (MIC=100 uM). Not effective against the Gram-negative bacterium E.coli at concentrations up to 250 uM. Lacks ability to induce contraction of smooth muscle in isolated guinea pig urinary bladder. Elicits histamine release from rat peritoneal mast cells. The polypeptide is Kassorin-S (Kassina senegalensis (Senegal running frog)).